The chain runs to 321 residues: Methionine import ATP-binding protein MetN (321 aa).

The ABC transporter domain occupies 2-241 (INAVDLHKVY…PGSLLARSLF (240 aa)). 38 to 45 (GPSGAGKS) lines the ATP pocket.

This sequence belongs to the ABC transporter superfamily. Methionine importer (TC 3.A.1.24) family. In terms of assembly, the complex is composed of two ATP-binding proteins (MetN), two transmembrane proteins (MetI) and a solute-binding protein (MetQ).

It localises to the cell membrane. It catalyses the reaction L-methionine(out) + ATP + H2O = L-methionine(in) + ADP + phosphate + H(+). The catalysed reaction is D-methionine(out) + ATP + H2O = D-methionine(in) + ADP + phosphate + H(+). Functionally, part of the ABC transporter complex MetNIQ involved in methionine import. Responsible for energy coupling to the transport system. The polypeptide is Methionine import ATP-binding protein MetN (Thermobifida fusca (strain YX)).